The chain runs to 66 residues: Large ribosomal subunit protein bL33c (66 aa).

The protein belongs to the bacterial ribosomal protein bL33 family.

The protein resides in the plastid. The protein localises to the chloroplast. In Physcomitrium patens (Spreading-leaved earth moss), this protein is Large ribosomal subunit protein bL33c.